The primary structure comprises 410 residues: Succinyl-CoA:(R)-benzylsuccinate CoA-transferase subunit BbsE (410 aa).

Belongs to the CoA-transferase III family. Heterotetramer composed of 2 BbsE subunits and 2 BbsF subunits.

It carries out the reaction (R)-2-benzylsuccinate + succinyl-CoA = (R)-2-benzylsuccinyl-CoA + succinate. The protein operates within xenobiotic degradation; toluene degradation. Inhibited by (S)-benzylsuccinyl-CoA. In terms of biological role, catalyzes the reversible conversion of (R)-2-benzylsuccinate to (R)-2-benzylsuccinyl-CoA. Inactive with (S)-benzylsuccinate. This chain is Succinyl-CoA:(R)-benzylsuccinate CoA-transferase subunit BbsE (bbsE), found in Thauera aromatica.